The chain runs to 199 residues: B3 domain-containing protein Os06g0107800 (199 aa).

The disordered stretch occupies residues 13–32; it reads QLQGGGGGHGGGGGGGGGER. Residues 15–29 are compositionally biased toward gly residues; it reads QGGGGGHGGGGGGGG. Positions 37–141 form a DNA-binding region, TF-B3; sequence FEKVVTPSDV…RLFIDCRKRA (105 aa).

The protein resides in the nucleus. This Oryza sativa subsp. japonica (Rice) protein is B3 domain-containing protein Os06g0107800.